Here is a 52-residue protein sequence, read N- to C-terminus: Insulin (52 aa).

3 disulfide bridges follow: Cys7–Cys38, Cys19–Cys51, and Cys37–Cys42.

The protein belongs to the insulin family. As to quaternary structure, heterodimer of a B chain and an A chain linked by two disulfide bonds.

The protein resides in the secreted. In terms of biological role, insulin decreases blood glucose concentration. It increases cell permeability to monosaccharides, amino acids and fatty acids. It accelerates glycolysis, the pentose phosphate cycle, and glycogen synthesis in liver. This is Insulin (ins) from Acipenser gueldenstaedtii (Russian sturgeon).